A 2027-amino-acid chain; its full sequence is Citron Rho-interacting kinase (2027 aa).

M1 is modified (N-acetylmethionine). The region spanning 97 to 360 (FEVRSLVGCG…FEGLCCHPFF (264 aa)) is the Protein kinase domain. Residues 103–111 (VGCGHFAEV) and K126 contribute to the ATP site. D221 functions as the Proton acceptor in the catalytic mechanism. Residues 361-431 (SKIDWNNIRN…SKALGILGRS (71 aa)) enclose the AGC-kinase C-terminal domain. Residues S433, S440, S480, and S582 each carry the phosphoserine modification. Residues 453–1297 (IKSKELQDSQ…SAREEAAHRK (845 aa)) are a coiled coil. An interaction with Rho/Rac region spans residues 1091–1302 (LAVKEHKAEI…AAHRKATDHP (212 aa)). Y1196 carries the post-translational modification Phosphotyrosine. Positions 1290 to 1303 (REEAAHRKATDHPH) are enriched in basic and acidic residues. 2 disordered regions span residues 1290–1310 (REEA…PATA) and 1322–1351 (SPEH…EFSR). Residues 1327-1337 (PSAMSLLAPPS) show a composition bias toward low complexity. A compositionally biased stretch (basic and acidic residues) spans 1339 to 1351 (RRKESSTPEEFSR). Residues 1362–1411 (PHRFNVGLNMRATKCAVCLDTVHFGRQASKCLECQVMCHPKCSTCLPATC) form a Phorbol-ester/DAG-type zinc finger. Residues 1443-1563 (SLHLEGWMKV…WVTALESVVA (121 aa)) form the PH domain. A CNH domain is found at 1591-1881 (RLDMNCTLPF…RYLGPAISSG (291 aa)). K1721 carries the post-translational modification N6-acetyllysine. A disordered region spans residues 1905–2012 (ESGTEHHRGP…RGRLPAGAVR (108 aa)). At S1940 the chain carries Phosphoserine. Residues 1948–2003 (SHPREPSTPHRYREGRTELRRDKSPGRPLEREKSPGRMLSTRRERSPGRLFEDSSR) show a composition bias toward basic and acidic residues. The SH3-binding motif lies at 1953–1958 (PSTPHR). Position 1993 is a phosphoserine (S1993). Residue T2013 is modified to Phosphothreonine.

This sequence belongs to the protein kinase superfamily. AGC Ser/Thr protein kinase family. In terms of assembly, directly interacts with KIF14 depending on the activation state (stronger interaction with the kinase-dead form). Homodimer. Interacts with TTC3.

It localises to the cytoplasm. The enzyme catalyses L-seryl-[protein] + ATP = O-phospho-L-seryl-[protein] + ADP + H(+). It catalyses the reaction L-threonyl-[protein] + ATP = O-phospho-L-threonyl-[protein] + ADP + H(+). In terms of biological role, plays a role in cytokinesis. Required for KIF14 localization to the central spindle and midbody. Putative RHO/RAC effector that binds to the GTP-bound forms of RHO and RAC1. It probably binds p21 with a tighter specificity in vivo. Displays serine/threonine protein kinase activity. Plays an important role in the regulation of cytokinesis and the development of the central nervous system. Phosphorylates MYL9/MLC2. The chain is Citron Rho-interacting kinase (CIT) from Homo sapiens (Human).